The following is a 345-amino-acid chain: Phosphate acyltransferase (345 aa).

It belongs to the PlsX family. In terms of assembly, homodimer. Probably interacts with PlsY.

It is found in the cytoplasm. The catalysed reaction is a fatty acyl-[ACP] + phosphate = an acyl phosphate + holo-[ACP]. Its pathway is lipid metabolism; phospholipid metabolism. Functionally, catalyzes the reversible formation of acyl-phosphate (acyl-PO(4)) from acyl-[acyl-carrier-protein] (acyl-ACP). This enzyme utilizes acyl-ACP as fatty acyl donor, but not acyl-CoA. This Proteus mirabilis (strain HI4320) protein is Phosphate acyltransferase.